The chain runs to 280 residues: Urease accessory protein UreD (280 aa).

The protein belongs to the UreD family. In terms of assembly, ureD, UreF and UreG form a complex that acts as a GTP-hydrolysis-dependent molecular chaperone, activating the urease apoprotein by helping to assemble the nickel containing metallocenter of UreC. The UreE protein probably delivers the nickel.

The protein resides in the cytoplasm. In terms of biological role, required for maturation of urease via the functional incorporation of the urease nickel metallocenter. The polypeptide is Urease accessory protein UreD (Pseudomonas aeruginosa (strain UCBPP-PA14)).